We begin with the raw amino-acid sequence, 908 residues long: SKI/DACH domain-containing protein 1 (908 aa).

Residues 337 to 353 (HHHHHHHHHHHHHHHRA) are compositionally biased toward basic residues. The segment at 337–461 (HHHHHHHHHH…SSSGSSQVSV (125 aa)) is disordered. 2 stretches are compositionally biased toward low complexity: residues 370-389 (PHLG…SSYS) and 396-410 (SDFG…NSVS). Acidic residues predominate over residues 411 to 429 (SEEEEEEGEEEEEEEEEEG). Low complexity predominate over residues 449 to 461 (ESDSSSGSSQVSV). Residue lysine 688 forms a Glycyl lysine isopeptide (Lys-Gly) (interchain with G-Cter in SUMO2) linkage. Disordered stretches follow at residues 744–763 (ETPS…TLGS) and 792–818 (LQTP…TNEG). Residues 746-761 (PSLNPLAQSQGLSCTL) are compositionally biased toward polar residues.

This sequence belongs to the DACH/dachshund family.

In Homo sapiens (Human), this protein is SKI/DACH domain-containing protein 1 (SKIDA1).